The chain runs to 238 residues: UPF0280 protein Mboo_1274 (238 aa).

The protein belongs to the UPF0280 family.

In Methanoregula boonei (strain DSM 21154 / JCM 14090 / 6A8), this protein is UPF0280 protein Mboo_1274.